A 293-amino-acid chain; its full sequence is Cell division protein FtsQ (293 aa).

The Cytoplasmic portion of the chain corresponds to 1–27; sequence MRPLMRNRASERGVDPAPSRWAWRMQR. Residues 28–48 form a helical membrane-spanning segment; sequence LLLTPAFLLFLRAGVPVLVLF. The Periplasmic portion of the chain corresponds to 49 to 293; the sequence is GAATWWLSDT…WWEIRQVSRQ (245 aa). Residues 81–149 enclose the POTRA domain; it reads FMVQLMAVDG…GVLHIDVEPR (69 aa).

The protein belongs to the FtsQ/DivIB family. FtsQ subfamily.

The protein localises to the cell inner membrane. Essential cell division protein. The chain is Cell division protein FtsQ from Roseobacter litoralis (strain ATCC 49566 / DSM 6996 / JCM 21268 / NBRC 15278 / OCh 149).